The chain runs to 96 residues: DNA-directed RNA polymerase subunit Rpo11 (96 aa).

It belongs to the archaeal Rpo11/eukaryotic RPB11/RPC19 RNA polymerase subunit family. As to quaternary structure, part of the RNA polymerase complex.

The protein resides in the cytoplasm. The enzyme catalyses RNA(n) + a ribonucleoside 5'-triphosphate = RNA(n+1) + diphosphate. Functionally, DNA-dependent RNA polymerase (RNAP) catalyzes the transcription of DNA into RNA using the four ribonucleoside triphosphates as substrates. The sequence is that of DNA-directed RNA polymerase subunit Rpo11 from Methanococcus maripaludis (strain C6 / ATCC BAA-1332).